A 101-amino-acid chain; its full sequence is Integration host factor subunit beta (101 aa).

Residues Ala-58–Ala-101 form a disordered region. Residues Thr-82–Arg-92 are compositionally biased toward basic and acidic residues.

The protein belongs to the bacterial histone-like protein family. In terms of assembly, heterodimer of an alpha and a beta chain.

Functionally, this protein is one of the two subunits of integration host factor, a specific DNA-binding protein that functions in genetic recombination as well as in transcriptional and translational control. The chain is Integration host factor subunit beta from Rhodopseudomonas palustris (strain BisB18).